A 225-amino-acid polypeptide reads, in one-letter code: E3 ubiquitin-protein ligase ATL59 (225 aa).

A helical transmembrane segment spans residues 22 to 42 (FTFIVCVPICVILIVLLVLYI). The RING-type; atypical zinc-finger motif lies at 97 to 139 (CSVCLGDYQAEEKLQQMPSCGHTFHMECIDLWLTSHTTCPLCR).

The protein belongs to the RING-type zinc finger family. ATL subfamily.

Its subcellular location is the membrane. The catalysed reaction is S-ubiquitinyl-[E2 ubiquitin-conjugating enzyme]-L-cysteine + [acceptor protein]-L-lysine = [E2 ubiquitin-conjugating enzyme]-L-cysteine + N(6)-ubiquitinyl-[acceptor protein]-L-lysine.. It participates in protein modification; protein ubiquitination. E3 ubiquitin-protein ligase able to catalyze polyubiquitination with ubiquitin-conjugating enzyme E2 UBC8, UBC10, UBC11, and UBC34 in vitro. This Arabidopsis thaliana (Mouse-ear cress) protein is E3 ubiquitin-protein ligase ATL59 (ATL59).